Reading from the N-terminus, the 63-residue chain is ATP synthase membrane subunit K, mitochondrial (63 aa).

Residues 15–37 form a helical membrane-spanning segment; it reads TMRGRANVAKATWASLGLVYVLV.

As to quaternary structure, F-type ATPases have 2 components, CF(1) - the catalytic core - and CF(0) - the membrane proton channel. CF(1) has five subunits: alpha(3), beta(3), gamma(1), delta(1), epsilon(1). CF(0) has three main subunits: a, b and c. The ATP synthase complex/complex V exists as a monomeric and a dimeric supercomplex that helps shape mitochondrial cristae to optimize proton flow.

It localises to the mitochondrion membrane. Mitochondrial membrane ATP synthase (F(1)F(0) ATP synthase or Complex V) produces ATP from ADP in the presence of a proton gradient across the membrane which is generated by electron transport complexes of the respiratory chain. F-type ATPases consist of two structural domains, F(1) - containing the extramembraneous catalytic core and F(0) - containing the membrane proton channel, linked together by a central stalk and a peripheral stalk. During catalysis, ATP synthesis in the catalytic domain of F(1) is coupled via a rotary mechanism of the central stalk subunits to proton translocation. ATP5MK is a minor subunit of the mitochondrial membrane ATP synthase required for dimerization of the ATP synthase complex and as such regulates ATP synthesis in the mitochondria. The protein is ATP synthase membrane subunit K, mitochondrial of Drosophila melanogaster (Fruit fly).